The primary structure comprises 387 residues: Phosphoglycerate kinase (387 aa).

Substrate contacts are provided by residues 21-23 (DLN), arginine 36, 59-62 (HLGR), arginine 113, and arginine 146. Residues lysine 197, glutamate 314, and 340–343 (GGDT) contribute to the ATP site.

Belongs to the phosphoglycerate kinase family. In terms of assembly, monomer.

Its subcellular location is the cytoplasm. It carries out the reaction (2R)-3-phosphoglycerate + ATP = (2R)-3-phospho-glyceroyl phosphate + ADP. It participates in carbohydrate degradation; glycolysis; pyruvate from D-glyceraldehyde 3-phosphate: step 2/5. The chain is Phosphoglycerate kinase from Pseudomonas fluorescens (strain SBW25).